A 610-amino-acid polypeptide reads, in one-letter code: Elongation factor 4 (610 aa).

The region spanning 11–193 (EKIRNFSIIA…QIVEKVPAPT (183 aa)) is the tr-type G domain. Residues 23–28 (DHGKST) and 140–143 (NKID) contribute to the GTP site.

Belongs to the TRAFAC class translation factor GTPase superfamily. Classic translation factor GTPase family. LepA subfamily.

It is found in the cell membrane. It carries out the reaction GTP + H2O = GDP + phosphate + H(+). Its function is as follows. Required for accurate and efficient protein synthesis under certain stress conditions. May act as a fidelity factor of the translation reaction, by catalyzing a one-codon backward translocation of tRNAs on improperly translocated ribosomes. Back-translocation proceeds from a post-translocation (POST) complex to a pre-translocation (PRE) complex, thus giving elongation factor G a second chance to translocate the tRNAs correctly. Binds to ribosomes in a GTP-dependent manner. The protein is Elongation factor 4 of Streptococcus pyogenes serotype M1.